The chain runs to 243 residues: Protein unc-119 homolog B (243 aa).

A compositionally biased stretch (polar residues) spans 1–21 (MNSQSSRNETAATAVNGSDSA). The disordered stretch occupies residues 1–49 (MNSQSSRNETAATAVNGSDSAAASRDHKSGGGVLKRLKSRRNQVDRRPV). A tetradecanoate-binding site is contributed by Y134.

This sequence belongs to the PDE6D/unc-119 family. In terms of tissue distribution, detected in embryo. Detected in larvae four days after fertilization, in retina and neural tissues (at protein level). Detected in embryos at the sphere stage, during gastrulation, somitogenesis and in swimming larvae, both within and outside of the developing nervous system. Detected in adults.

It localises to the cell projection. It is found in the cilium. Its function is as follows. Myristoyl-binding protein that acts as a cargo adapter: specifically binds the myristoyl moiety of a subset of N-terminally myristoylated proteins and is required for their localization. Plays a key role in localization of proteins to the primary cilium membrane. The protein is Protein unc-119 homolog B (unc119b) of Danio rerio (Zebrafish).